The sequence spans 735 residues: DNA replication licensing factor mcm5-B (735 aa).

Residues Ile-332–Met-538 enclose the MCM domain. Residue Arg-372 coordinates ADP. An Arginine finger motif is present at residues Ser-513 to Asp-516.

The protein belongs to the MCM family. Component of the mcm2-7 complex (RLF-M). The complex forms a toroidal hexameric ring with the proposed subunit order mcm2-mcm6-mcm4-mcm7-mcm3-mcm5. The heterodimer of mmcm3/mcm5 interacts with mcm4, mmcm6, mcm7 and weakly with mcm2. Component of the CMG helicase complex, composed of the mcm2-7 complex, the GINS complex and cdc45.

The protein localises to the nucleus. Its subcellular location is the chromosome. It carries out the reaction ATP + H2O = ADP + phosphate + H(+). Acts as a component of the MCM2-7 complex (MCM complex) which is the replicative helicase essential for 'once per cell cycle' DNA replication initiation and elongation in eukaryotic cells. Core component of CDC45-MCM-GINS (CMG) helicase, the molecular machine that unwinds template DNA during replication, and around which the replisome is built. The active ATPase sites in the MCM2-7 ring are formed through the interaction surfaces of two neighboring subunits such that a critical structure of a conserved arginine finger motif is provided in trans relative to the ATP-binding site of the Walker A box of the adjacent subunit. The six ATPase active sites, however, are likely to contribute differentially to the complex helicase activity. The sequence is that of DNA replication licensing factor mcm5-B (mcm5-b) from Xenopus laevis (African clawed frog).